The following is a 1409-amino-acid chain: Copia protein (1409 aa).

The segment at 230–247 (VKCHHCGREGHIKKDCFH) adopts a CCHC-type zinc-finger fold. D292 serves as the catalytic For protease activity. The 169-residue stretch at 476–644 (HIKRPLFVVH…TPYEMWHNKK (169 aa)) folds into the Integrase catalytic domain. 2 disordered regions span residues 760–780 (SKESENKNFPNDSRKIIQTEF) and 805–851 (NESK…NDGI). Residues 827–841 (ESRESETAEHLKEIG) are compositionally biased toward basic and acidic residues.

The chain is Copia protein (GIP) from Drosophila melanogaster (Fruit fly).